The chain runs to 202 residues: Hypoxanthine-guanine phosphoribosyltransferase (202 aa).

K66 and G67 together coordinate diphosphate. Residues E122 and D123 each contribute to the Mg(2+) site. D126 (proton acceptor) is an active-site residue. GMP contacts are provided by residues K154, 175 to 176, and D182; that span reads FV. R188 serves as a coordination point for diphosphate.

This sequence belongs to the purine/pyrimidine phosphoribosyltransferase family. Mg(2+) is required as a cofactor.

It localises to the cytoplasm. The enzyme catalyses IMP + diphosphate = hypoxanthine + 5-phospho-alpha-D-ribose 1-diphosphate. It catalyses the reaction GMP + diphosphate = guanine + 5-phospho-alpha-D-ribose 1-diphosphate. The protein operates within purine metabolism; IMP biosynthesis via salvage pathway; IMP from hypoxanthine: step 1/1. Its pathway is purine metabolism; GMP biosynthesis via salvage pathway; GMP from guanine: step 1/1. In terms of biological role, purine salvage pathway enzyme that catalyzes the transfer of the ribosyl-5-phosphate group from 5-phospho-alpha-D-ribose 1-diphosphate (PRPP) to the N9 position of the 6-oxopurines hypoxanthine and guanine to form the corresponding ribonucleotides IMP (inosine 5'-monophosphate) and GMP (guanosine 5'-monophosphate), with the release of PPi. This chain is Hypoxanthine-guanine phosphoribosyltransferase (hpt), found in Mycobacterium tuberculosis (strain CDC 1551 / Oshkosh).